The sequence spans 247 residues: MAVRAQFENSNEVGVFSRLTNSYALVAIGASENFYSVFEAELQDVIPICHATIAGTRIIGRLTAGNRKGLLVPTTTTDQELQHLRNTLPDDVKIQRIEERLSALGNVICCNDHVALIHPDLERETEEIIADVLGVEVFRQTIADNVLTGSYMALSNQGGIVHPKTSIRDQDELSSLLQVPLVAGSVNRGSPVVGAGLVVNDWLAVTGLDTTATELSVIESVFRLGENGPGGIGQGVANKDSIVESFY.

Serine 174 and serine 175 each carry phosphoserine; by CK1.

It belongs to the eIF-6 family. As to quaternary structure, monomer. Associates with the 60S ribosomal subunit. In terms of processing, phosphorylation at Ser-174 and Ser-175 promotes nuclear export.

The protein localises to the cytoplasm. It localises to the nucleus. Its subcellular location is the nucleolus. Binds to the 60S ribosomal subunit and prevents its association with the 40S ribosomal subunit to form the 80S initiation complex in the cytoplasm. Is also involved in ribosome biogenesis. Associates with pre-60S subunits in the nucleus and is involved in its nuclear export. This Emericella nidulans (strain FGSC A4 / ATCC 38163 / CBS 112.46 / NRRL 194 / M139) (Aspergillus nidulans) protein is Eukaryotic translation initiation factor 6 (tif6).